Reading from the N-terminus, the 587-residue chain is Protein cereblon (587 aa).

Disordered stretches follow at residues 1-56 (MDEE…PAEY), 78-113 (DVLQDDTASEGSHPSSDMSLESPGSEDDSDVQGLPN), and 157-195 (FSQERRRSRTSEETSQEEAAEEPDDPPPQQPPLPPIDIG). 2 stretches are compositionally biased toward polar residues: residues 22–31 (EDQSQSQGLQ) and 86–96 (SEGSHPSSDMS). The segment covering 159–168 (QERRRSRTSE) has biased composition (basic and acidic residues). Positions 170–181 (TSQEEAAEEPDD) are enriched in acidic residues. The segment covering 182-191 (PPPQQPPLPP) has biased composition (pro residues). Residues 227–453 (HMLIFLHHHI…LIKSTFKDET (227 aa)) enclose the Lon N-terminal domain. A CULT domain is found at 452 to 561 (ETLFFCRYCN…LSGSSVRIGK (110 aa)). Cysteine 457, cysteine 460, cysteine 526, and cysteine 529 together coordinate Zn(2+).

Belongs to the CRBN family. In terms of assembly, likely a component of a DCX (DDB1-CUL4-X-box) protein ligase complex. May interact with pic/DDB1. In terms of processing, ubiquitinated.

It localises to the nucleus. It participates in protein modification; protein ubiquitination. Functionally, substrate recognition component of a DCX (DDB1-CUL4-X-box) E3 protein ligase complex that mediates the ubiquitination and subsequent proteasomal degradation of target proteins. Has an essential role in mediating growth by negatively regulating insulin signaling. It also has a role in maintaining presynaptic function in the neuromuscular junction synapses of third-instar larvae. This chain is Protein cereblon, found in Drosophila simulans (Fruit fly).